We begin with the raw amino-acid sequence, 203 residues long: V-type ATP synthase subunit D (203 aa).

This sequence belongs to the V-ATPase D subunit family.

Produces ATP from ADP in the presence of a proton gradient across the membrane. The polypeptide is V-type ATP synthase subunit D (Streptococcus pneumoniae (strain CGSP14)).